The following is a 1239-amino-acid chain: MFPYPTLNYPPMAPINPMAYRDPNPPRQVAPFRPPLAAQIEDLRRSIANLTLKQRAPNPPAGPPAKRKKPAPSLSLETKKKRPPPPAKKQKRKPKPGKRQRMCMKLESDKTFPIMLNGQVNGYACVVGGRVFKPLHVEGRIDNEQLAAIKLKKASIYDLEYGDVPQCMKSDTLQYTSDKPPGFYNWHHGAVQYENNRFTVPRGVGGKGDSGRPILDNKGRVVAIVQGGVNEGSRTALSVVTWNQKGVTVKDTPEGSEPWSLATVMCVLANITFPCDQPPCMPCCYEKNPHETLTMLEQNYDSRAYDQLLDAAVKCNARRTRRDLDTHFTQYKLARPYIADCPNCGHSRCDSPIAIEEVRGDAHAGVIRIQTSAMFGLKRHGVDLAYMSFMNGKTQKSIKIDNLHVRTSAPCSLVSHHGYYILAQCPPGDTVTVGFHDGPNRHTCRLAHKVEFRPVGREKYRHPPEHGVELPCNRYTHKRADQGHYVEMHQPGLVGDHSLLSIHSAKVKITVPSGAQVKYYCKCPDVREGITSSDHTTTCTDVKQCRAYLIDNKKWVYNSGRLPRGEGDTFKGKLHVPFVPVKAKCIATLAPEPLVEHKHRTLILHLHPDHPTLLTTRSLGSDANPTRQWIERPTTVNFTVTGEGLEYTWGNHPPKRVWAQESGEGNPHGWPHVVVVYYYNRYPLTTIIGLCTCVAIIMVSCDHPCGSFSGLRNLCITPYKLAPNAQVPILLALLCCIKPTRADDTLQVLNYLWNNNQNFFWMQTLIPLAALIVCMRMLAALFCCGPAFLLVCGAWAAAYEHTAVMPNKVGIPYKALVERPGYAPVHLQIQLVNTRIIPSTNLEYITCKYKTKVPSPVVKCCGATQCTSKPHPDYQCQVFTGVYPFMWGGAYCFCDTENTQMSEAYVERSEECSIDHAKAYKVHTGTVQAMVNITYGSVTWRSADVYVNGETPAKIGDAKLIIGPLSSAWSPFDNKVVVYGHEVYNYDFPEYGTGKAGSFGDLQSRTSTSNDLYANTNLKLQRPQAGIVHTPFTQAPSGFERWKRDKGAPLNDVAPFGCSIALEPLRPENCAVGSIPISIDIPDAAFTRISETPTVSDLECKITECTYASDFGGIATLPTNPVKQETVQFIVHQVLQLLKRMTSPLLRAGSFTFHFSTANIHPAFKLQVCTSGITCKGDCKPPKDHIVDYPAQHTESFTSAISATAWSWLKVLVGGTSAFIVLGLIATAVVALVLFFHRH.

Residues 1–35 (MFPYPTLNYPPMAPINPMAYRDPNPPRQVAPFRPP) form a necessary for nucleocapsid assembly and virus assembly region. Residues 1-101 (MFPYPTLNYP…RKPKPGKRQR (101 aa)) form a disordered region. Positions 23–34 (PNPPRQVAPFRP) are enriched in pro residues. The host transcription inhibition stretch occupies residues 36 to 69 (LAAQIEDLRRSIANLTLKQRAPNPPAGPPAKRKK). Positions 43 to 50 (LRRSIANL) match the Supraphysiological nuclear export signal motif. Residue Asn-49 is glycosylated (N-linked (GlcNAc...) asparagine; by host). The Nuclear localization signal motif lies at 66–69 (KRKK). Positions 79-101 (KKKRPPPPAKKQKRKPKPGKRQR) are enriched in basic residues. Positions 81–111 (KRPPPPAKKQKRKPKPGKRQRMCMKLESDKT) are binding to the viral RNA. The interval 96–110 (PGKRQRMCMKLESDK) is ribosome-binding. At Ser-108 the chain carries Phosphoserine. A Peptidase S3 domain is found at 110–259 (KTFPIMLNGQ…KDTPEGSEPW (150 aa)). Thr-111 is subject to Phosphothreonine. The active-site Charge relay system is the His-136. Residues 152 to 157 (KKASIY) are interaction with spike glycoprotein E2. Active-site charge relay system residues include Asp-158 and Ser-210. Positions 244–248 (QKGVT) are interaction with spike glycoprotein E2. Residues 260-271 (SLATVMCVLANI) form a functions as an uncleaved signal peptide for the precursor of protein E3/E2 region. Topologically, residues 260–681 (SLATVMCVLA…HVVVVYYYNR (422 aa)) are extracellular. 9 cysteine pairs are disulfide-bonded: Cys-266/Cys-275, Cys-280/Cys-284, Cys-283/Cys-315, Cys-341/Cys-444, Cys-344/Cys-349, Cys-411/Cys-425, Cys-472/Cys-585, Cys-521/Cys-545, and Cys-523/Cys-539. Asn-270 carries an N-linked (GlcNAc...) asparagine; by host glycan. An N-linked (GlcNAc...) asparagine; by host glycan is attached at Asn-637. Residues 682-702 (YPLTTIIGLCTCVAIIMVSCD) form a helical membrane-spanning segment. The Cytoplasmic portion of the chain corresponds to 703-742 (HPCGSFSGLRNLCITPYKLAPNAQVPILLALLCCIKPTRA). Cys-705 carries the S-palmitoyl cysteine; by host lipid modification. The interaction with the capsid protein stretch occupies residues 710-714 (GLRNL). Positions 714–734 (LCITPYKLAPNAQVPILLALL) are transient transmembrane before p62-6K protein processing. Residues Cys-715, Cys-735, and Cys-736 are each lipidated (S-palmitoyl cysteine; by host). Cys-715 and Cys-736 form a disulfide bridge. Residues 743–754 (DDTLQVLNYLWN) lie on the Extracellular side of the membrane. The chain crosses the membrane as a helical span at residues 755–775 (NNQNFFWMQTLIPLAALIVCM). A topological domain (cytoplasmic) is located at residue Arg-776. Residues 777–797 (MLAALFCCGPAFLLVCGAWAA) form a helical membrane-spanning segment. At 798 to 1215 (AYEHTAVMPN…WSWLKVLVGG (418 aa)) the chain is on the extracellular side. 4 disulfides stabilise this stretch: Cys-847–Cys-912, Cys-860–Cys-892, Cys-861–Cys-894, and Cys-866–Cys-876. Residues 882-899 (VYPFMWGGAYCFCDTENT) are E1 fusion peptide loop. N-linked (GlcNAc...) asparagine; by host glycosylation is found at Asn-932 and Asn-1069. Intrachain disulfides connect Cys-1058/Cys-1070, Cys-1100/Cys-1175, and Cys-1105/Cys-1179. A helical membrane pass occupies residues 1216 to 1236 (TSAFIVLGLIATAVVALVLFF). The Cytoplasmic portion of the chain corresponds to 1237–1239 (HRH).

As to quaternary structure, homodimer. Homomultimer. Interacts with host karyopherin KPNA4; this interaction allows the nuclear import of the viral capsid protein. Interacts with spike glycoprotein E2. Interacts with host IRAK1; the interaction leads to inhibition of IRAK1-dependent signaling. Part of a tetrameric complex composed of host CRM1, host importin alpha/beta dimer and the viral capsid; this complex blocks the receptor-mediated transport through the nuclear pore. Interacts with host phosphatase PPP1CA; this interaction dephosphorylates the capsid protein, which increases its ability to bind to the viral genome. In terms of assembly, the precursor of protein E3/E2 and E1 form a heterodimer shortly after synthesis. The precursor of protein E3/E2 and E1 form a heterodimer shortly after synthesis. Processing of the precursor of protein E3/E2 into E2 and E3 results in a heterodimer of the spike glycoproteins E2 and E1. Spike at virion surface are constituted of three E2-E1 heterodimers. After target cell attachment and endocytosis, E1 change conformation to form homotrimers. E2-E1 heterodimers interact with host VLDLR or LRP8/APOER2 to mediate viral entry. Interacts with 6K protein. As to quaternary structure, interacts with spike glycoprotein E1. Processing of the precursor of protein E3/E2 into E2 and E3 results in a heterodimer of the spike glycoproteins E2 and E1. Spike at virion surface are constituted of a trimer of E2-E1 heterodimers. Interacts with 6K protein. E2-E1 heterodimers interact with host VLDLR or LRP8/APOER2 to mediate viral entry. Interacts (via E2-A) with host VLDLR (via class A repeats); this interaction mediates viral entry into host cell. Interacts with host LRP8/APOER2 (via class A repeats); this interaction mediates viral entry into host cell. In terms of assembly, oligomer. Interacts with spike glycoprotein E1. Interacts with spike glycoprotein E2. Structural polyprotein: Specific enzymatic cleavages in vivo yield mature proteins. Capsid protein is auto-cleaved during polyprotein translation, unmasking a signal peptide at the N-terminus of the precursor of E3/E2. The remaining polyprotein is then targeted to the host endoplasmic reticulum, where host signal peptidase cleaves it into pE2, 6K and E1 proteins. pE2 is further processed to mature E3 and E2 by host furin in trans-Golgi vesicle. Post-translationally, phosphorylated on serine and threonine residues. In terms of processing, palmitoylated via thioester bonds. These palmitoylations may induce disruption of the C-terminus transmembrane. This would result in the reorientation of E2 C-terminus from lumenal to cytoplasmic side. N-glycosylated. Post-translationally, palmitoylated via thioester bonds.

The protein localises to the virion. It is found in the host cytoplasm. Its subcellular location is the host cell membrane. It localises to the host nucleus. The protein resides in the virion membrane. The protein localises to the host Golgi apparatus. It is found in the host trans-Golgi network. Its subcellular location is the host endoplasmic reticulum. The catalysed reaction is Autocatalytic release of the core protein from the N-terminus of the togavirus structural polyprotein by hydrolysis of a -Trp-|-Ser- bond.. Forms an icosahedral capsid with a T=4 symmetry composed of 240 copies of the capsid protein surrounded by a lipid membrane through which penetrate 80 spikes composed of trimers of E1-E2 heterodimers. The capsid protein binds to the viral RNA genome at a site adjacent to a ribosome binding site for viral genome translation following genome release. Possesses a protease activity that results in its autocatalytic cleavage from the nascent structural protein. Following its self-cleavage, the capsid protein transiently associates with ribosomes, and within several minutes the protein binds to viral RNA and rapidly assembles into icosahedric core particles. The resulting nucleocapsid eventually associates with the cytoplasmic domain of the spike glycoprotein E2 at the cell membrane, leading to budding and formation of mature virions. In case of infection, new virions attach to target cells and after clathrin-mediated endocytosis their membrane fuses with the host endosomal membrane. This leads to the release of the nucleocapsid into the cytoplasm, followed by an uncoating event necessary for the genomic RNA to become accessible. The uncoating might be triggered by the interaction of capsid proteins with ribosomes. Binding of ribosomes would release the genomic RNA since the same region is genomic RNA-binding and ribosome-binding. Specifically inhibits interleukin-1 receptor-associated kinase 1/IRAK1-dependent signaling during viral entry, representing a means by which the alphaviruses may evade innate immune detection and activation prior to viral gene expression. Inhibits host transcription. Forms a tetrameric complex with XPO1/CRM1 and the nuclear import receptor importin. This complex blocks the central channel of host nuclear pores thereby inhibiting the receptor-mediated nuclear transport and thus the host mRNA and rRNA transcription. The inhibition of transcription is linked to a cytopathic effect on the host cell. In terms of biological role, provides the signal sequence for the translocation of the precursor of protein E3/E2 to the host endoplasmic reticulum. Furin-cleaved E3 remains associated with spike glycoprotein E1 and mediates pH protection of the latter during the transport via the secretory pathway. After virion release from the host cell, the assembly protein E3 is gradually released in the extracellular space. Its function is as follows. Plays a role in viral attachment to target host cell, by binding to the cell receptors VLDLR or LRP8/APOER2. Synthesized as a p62 precursor which is processed by furin at the cell membrane just before virion budding, giving rise to E2-E1 heterodimer. The p62-E1 heterodimer is stable, whereas E2-E1 is unstable and dissociate at low pH. p62 is processed at the last step, presumably to avoid E1 fusion activation before its final export to cell surface. E2 C-terminus contains a transitory transmembrane that would be disrupted by palmitoylation, resulting in reorientation of the C-terminal tail from lumenal to cytoplasmic side. This step is critical since E2 C-terminus is involved in budding by interacting with capsid proteins. This release of E2 C-terminus in cytoplasm occurs lately in protein export, and precludes premature assembly of particles at the endoplasmic reticulum membrane. Functionally, acts as a viroporin that participates in virus glycoprotein processing and transport to the plasma membrane, cell permeabilization and budding of viral particles. Disrupts the calcium homeostasis of the cell, probably at the endoplasmic reticulum level. This leads to cytoplasmic calcium elevation. Because of its lipophilic properties, the 6K protein is postulated to influence the selection of lipids that interact with the transmembrane domains of the glycoproteins, which, in turn, affects the deformability of the bilayer required for the extreme curvature that occurs as budding proceeds. Present in low amount in virions, about 3% compared to viral glycoproteins. Class II viral fusion protein. Fusion activity is inactive as long as E1 is bound to E2 in mature virion. After virus attachment to target cell via host VLDLR or LRP8/APOER2 and endocytosis, acidification of the endosome induces dissociation of E1/E2 heterodimer and concomitant trimerization of the E1 subunits. This E1 trimer is fusion active, and promotes release of viral nucleocapsid in cytoplasm after endosome and viral membrane fusion. Efficient fusion requires the presence of cholesterol and sphingolipid in the target membrane. This Aedes (Human) protein is Structural polyprotein.